A 24-amino-acid chain; its full sequence is Brevinin-1Ra (24 aa).

C18 and C24 are joined by a disulfide.

In terms of tissue distribution, expressed by the skin glands.

Its subcellular location is the secreted. In terms of biological role, antimicrobial peptide. The protein is Brevinin-1Ra of Pelophylax ridibundus (Marsh frog).